We begin with the raw amino-acid sequence, 158 residues long: Cytosine deaminase (158 aa).

A CMP/dCMP-type deaminase domain is found at 9 to 129; the sequence is KWDQKGMDIA…KYLQTRGHEV (121 aa). Substrate is bound at residue N51. H62 is a Zn(2+) binding site. E64 (proton donor) is an active-site residue. Zn(2+)-binding residues include C91 and C94. D155 contributes to the substrate binding site.

Belongs to the cytidine and deoxycytidylate deaminase family. As to quaternary structure, homodimer. Requires Zn(2+) as cofactor.

It is found in the cytoplasm. It localises to the nucleus. It catalyses the reaction cytosine + H2O + H(+) = uracil + NH4(+). It functions in the pathway pyrimidine metabolism; UMP biosynthesis via salvage pathway; uracil from cytosine: step 1/1. Functionally, catalyzes the hydrolytic deamination of cytosine to uracil or 5-methylcytosine to thymine. Is involved in the pyrimidine salvage pathway, which allows the cell to utilize cytosine for pyrimidine nucleotide synthesis. This is Cytosine deaminase from Saccharomyces cerevisiae (strain ATCC 204508 / S288c) (Baker's yeast).